The chain runs to 366 residues: MAGNTFGKLFTLSTFGESHGIAIGGVIDGCPPGLEISEADLQVDLDRRKPGTSRYTTARREEDEVQILSGVFEGKTTGTSIGLLIKNTDQRSNDYSKIKDTFRPGHADYTYQQKYGLRDYRGGGRSSARETAIRVAAGGVAKKFLKTHLGIEVRGYLSKLGPIKIDKVDHSVTNTNAFFCPDESKLEALDDYMRDLKKQGDSIGAKVSVVATNMPVGLGEPIFDRLDADLAHAMMGINAVKGVEVGDGFDTVEQKGSEHRDLMSADGFKSNRSGGVLGGISSGQDLVVHMALKPTSSISVPGESIDINGETAEVVTKGRHDPCVGIRAVPIAEAMMALVLMDHYLRHRGQNADVQSITPVIPAQSK.

R48 and R54 together coordinate NADP(+). FMN-binding positions include 125 to 127 (RSS), 238 to 239 (NA), G278, 293 to 297 (KPTSS), and R319.

It belongs to the chorismate synthase family. As to quaternary structure, homotetramer. Requires FMNH2 as cofactor.

The catalysed reaction is 5-O-(1-carboxyvinyl)-3-phosphoshikimate = chorismate + phosphate. It functions in the pathway metabolic intermediate biosynthesis; chorismate biosynthesis; chorismate from D-erythrose 4-phosphate and phosphoenolpyruvate: step 7/7. Catalyzes the anti-1,4-elimination of the C-3 phosphate and the C-6 proR hydrogen from 5-enolpyruvylshikimate-3-phosphate (EPSP) to yield chorismate, which is the branch point compound that serves as the starting substrate for the three terminal pathways of aromatic amino acid biosynthesis. This reaction introduces a second double bond into the aromatic ring system. This Pseudoalteromonas atlantica (strain T6c / ATCC BAA-1087) protein is Chorismate synthase.